Here is a 136-residue protein sequence, read N- to C-terminus: Large ribosomal subunit protein uL16 (136 aa).

Belongs to the universal ribosomal protein uL16 family. As to quaternary structure, part of the 50S ribosomal subunit.

Functionally, binds 23S rRNA and is also seen to make contacts with the A and possibly P site tRNAs. This chain is Large ribosomal subunit protein uL16, found in Shewanella piezotolerans (strain WP3 / JCM 13877).